A 372-amino-acid chain; its full sequence is Alanine dehydrogenase 1 (372 aa).

His-94 is a catalytic residue. Residue 170 to 200 coordinates NAD(+); it reads TYVIFGGGVAATNAANVALGLNAKVIIIELN.

It belongs to the AlaDH/PNT family.

It carries out the reaction L-alanine + NAD(+) + H2O = pyruvate + NH4(+) + NADH + H(+). It functions in the pathway amino-acid degradation; L-alanine degradation via dehydrogenase pathway; NH(3) and pyruvate from L-alanine: step 1/1. In terms of biological role, may play a role in cell wall synthesis as L-alanine is an important constituent of the peptidoglycan layer. This chain is Alanine dehydrogenase 1 (ald1), found in Staphylococcus aureus (strain bovine RF122 / ET3-1).